A 155-amino-acid polypeptide reads, in one-letter code: Isotocin-neurophysin IT 1 (155 aa).

The first 19 residues, 1–19 (MTGTAISVCLLFLLSVCSA), serve as a signal peptide directing secretion. Cys-20 and Cys-25 are oxidised to a cystine. The residue at position 28 (Gly-28) is a Glycine amide. Disulfide bonds link Cys-41–Cys-85, Cys-44–Cys-58, Cys-52–Cys-75, Cys-59–Cys-65, Cys-92–Cys-105, Cys-99–Cys-117, and Cys-106–Cys-111.

This sequence belongs to the vasopressin/oxytocin family. Seven disulfide bonds are present in neurophysin.

Functionally, isotocin causes contraction of smooth muscles. The protein is Isotocin-neurophysin IT 1 of Takifugu rubripes (Japanese pufferfish).